Consider the following 701-residue polypeptide: Larval serum protein 2 (701 aa).

An N-terminal signal peptide occupies residues methionine 1 to alanine 21. N-linked (GlcNAc...) asparagine glycosylation occurs at asparagine 204.

This sequence belongs to the hemocyanin family. As to quaternary structure, homohexamer.

Its subcellular location is the secreted. It localises to the extracellular space. In terms of biological role, larval storage protein (LSP) which may serve as a store of amino acids for synthesis of adult proteins. The sequence is that of Larval serum protein 2 (Lsp2) from Drosophila melanogaster (Fruit fly).